Consider the following 400-residue polypeptide: Mu-type opioid receptor (400 aa).

Topologically, residues 1–68 (MDSSAVPANA…CPPTGSPSMI (68 aa)) are extracellular. N-linked (GlcNAc...) asparagine glycans are attached at residues Asn9, Asn12, Asn33, Asn40, and Asn48. The chain crosses the membrane as a helical span at residues 69-93 (TAITIMALYSIVCVVGLFGNFLVMY). At 94 to 106 (VIVRYTKMKTATN) the chain is on the cytoplasmic side. The chain crosses the membrane as a helical span at residues 107–131 (IYIFNLALADALATSTLPFQSVNYL). Over 132–142 (MGTWPFGTILC) the chain is Extracellular. The cysteines at positions 142 and 219 are disulfide-linked. Residues 143-165 (KIVISIDYYNMFTSIFTLCTMSV) form a helical membrane-spanning segment. Topologically, residues 166–185 (DRYIAVCHPVKALDFRTPRN) are cytoplasmic. Tyr168 is subject to Phosphotyrosine. The chain crosses the membrane as a helical span at residues 186-207 (AKIVNVCNWIISSAIGLPVMFM). At 208–230 (ATTKYRQGSIDCTLTFSHPTWYW) the chain is on the extracellular side. The chain crosses the membrane as a helical span at residues 231 to 255 (ENLLKICVFIFAFIMPVLIITVCYG). Over 256-279 (LMILRLKSVRMLSGSKEKDRNLRR) the chain is Cytoplasmic. A helical transmembrane segment spans residues 280–306 (ITRMVLVVVAVFIVCWTPIHIYVIIKA). Topologically, residues 307–314 (LVTIPETT) are extracellular. The chain crosses the membrane as a helical span at residues 315–338 (FQTVSWHFCIALGYTNSCLNPVLY). The NPxxY; plays a role in stabilizing the activated conformation of the receptor motif lies at 334–338 (NPVLY). The Cytoplasmic portion of the chain corresponds to 339–400 (AFLDENFKRC…NLEAETAPLP (62 aa)). Cys353 carries the S-palmitoyl cysteine lipid modification. Ser365 carries the post-translational modification Phosphoserine. Thr372 is subject to Phosphothreonine. The residue at position 377 (Ser377) is a Phosphoserine. The residue at position 396 (Thr396) is a Phosphothreonine.

It belongs to the G-protein coupled receptor 1 family. As to quaternary structure, forms homooligomers and heterooligomers with other GPCRs, such as OPRD1, OPRK1, OPRL1, NPFFR2, ADRA2A, SSTR2, CNR1 and CCR5 (probably in dimeric forms). Interacts with heterotrimeric G proteins; interaction with a heterotrimeric complex containing GNAI1, GNB1 and GNG2 stabilizes the active conformation of the receptor and increases its affinity for endomorphin-2, the synthetic opioid peptide DAMGO and for morphinan agonists. Interacts with PPL; the interaction disrupts agonist-mediated G-protein activation. Interacts (via C-terminus) with DNAJB4 (via C-terminus). Interacts with calmodulin; the interaction inhibits the constitutive activity of OPRM1; it abolishes basal and attenuates agonist-stimulated G-protein coupling. Interacts with FLNA, PLD2, RANBP9 and WLS and GPM6A. Interacts with RTP4. Interacts with SYP and GNAS. Interacts with RGS9, RGS17, RGS20, RGS4, PPP1R9B and HINT1. Post-translationally, phosphorylated. Differentially phosphorylated in basal and agonist-induced conditions. Agonist-mediated phosphorylation modulates receptor internalization. Phosphorylated by GRK2 in a agonist-dependent manner. Phosphorylation at Tyr-168 requires receptor activation, is dependent on non-receptor protein tyrosine kinase Src and results in a decrease in agonist efficacy by reducing G-protein coupling efficiency. Phosphorylated on tyrosine residues; the phosphorylation is involved in agonist-induced G-protein-independent receptor down-regulation. Phosphorylation at Ser-377 is involved in G-protein-dependent but not beta-arrestin-dependent activation of the ERK pathway. Ubiquitinated. A basal ubiquitination seems not to be related to degradation. Ubiquitination is increased upon formation of OPRM1:OPRD1 oligomers leading to proteasomal degradation; the ubiquitination is diminished by RTP4.

The protein localises to the cell membrane. Its subcellular location is the cell projection. It localises to the axon. It is found in the perikaryon. The protein resides in the dendrite. The protein localises to the endosome. Functionally, receptor for endogenous opioids such as beta-endorphin and endomorphin. Receptor for natural and synthetic opioids including morphine, heroin, DAMGO, fentanyl, etorphine, buprenorphin and methadone. Also activated by enkephalin peptides, such as Met-enkephalin or Met-enkephalin-Arg-Phe, with higher affinity for Met-enkephalin-Arg-Phe. Agonist binding to the receptor induces coupling to an inactive GDP-bound heterotrimeric G-protein complex and subsequent exchange of GDP for GTP in the G-protein alpha subunit leading to dissociation of the G-protein complex with the free GTP-bound G-protein alpha and the G-protein beta-gamma dimer activating downstream cellular effectors. The agonist- and cell type-specific activity is predominantly coupled to pertussis toxin-sensitive G(i) and G(o) G alpha proteins, GNAI1, GNAI2, GNAI3 and GNAO1, and to a lesser extent to pertussis toxin-insensitive G alpha proteins GNAZ and GNA15. They mediate an array of downstream cellular responses, including inhibition of adenylate cyclase activity and both N-type and L-type calcium channels, activation of inward rectifying potassium channels, mitogen-activated protein kinase (MAPK), phospholipase C (PLC), phosphoinositide/protein kinase (PKC), phosphoinositide 3-kinase (PI3K) and regulation of NF-kappa-B. Also couples to adenylate cyclase stimulatory G alpha proteins. The selective temporal coupling to G-proteins and subsequent signaling can be regulated by RGSZ proteins, such as RGS9, RGS17 and RGS4. Phosphorylation by members of the GPRK subfamily of Ser/Thr protein kinases and association with beta-arrestins is involved in short-term receptor desensitization. Beta-arrestins associate with the GPRK-phosphorylated receptor and uncouple it from the G-protein thus terminating signal transduction. The phosphorylated receptor is internalized through endocytosis via clathrin-coated pits which involves beta-arrestins. The activation of the ERK pathway occurs either in a G-protein-dependent or a beta-arrestin-dependent manner and is regulated by agonist-specific receptor phosphorylation. Acts as a class A G-protein coupled receptor (GPCR) which dissociates from beta-arrestin at or near the plasma membrane and undergoes rapid recycling. Receptor down-regulation pathways are varying with the agonist and occur dependent or independent of G-protein coupling. Endogenous ligands induce rapid desensitization, endocytosis and recycling. Heterooligomerization with other GPCRs can modulate agonist binding, signaling and trafficking properties. Involved in neurogenesis. This Saimiri boliviensis boliviensis (Bolivian squirrel monkey) protein is Mu-type opioid receptor (OPRM1).